A 626-amino-acid chain; its full sequence is ATP-dependent RNA helicase dbp-8 (626 aa).

Residues 1-25 (MPSATAAKAKKANANANLKSKVNKA) are compositionally biased toward low complexity. Positions 1–183 (MPSATAAKAK…ATPALPVPEP (183 aa)) are disordered. Residues 40–98 (DESDFGSELDVEDESAASDEEDEDEDEDEHDLEEGVSDEGEGVSDEEEGVSDEDEDEEN) are compositionally biased toward acidic residues. Over residues 161-173 (KQAEAPKTEKTEE) the composition is skewed to basic and acidic residues. Positions 195-223 (TTFDALNVRPWLVQSLANMAIKRPTGIQK) match the Q motif motif. The 181-residue stretch at 226-406 (IPEILKGRDC…ERPPIPGRAP (181 aa)) folds into the Helicase ATP-binding domain. 239 to 246 (SRTGSGKT) is a binding site for ATP. A DEAD box motif is present at residues 348–351 (DEAD). A Helicase C-terminal domain is found at 438-589 (YLHMFLLTPQ…GVNLETRVIR (152 aa)).

The protein belongs to the DEAD box helicase family. DDX49/DBP8 subfamily.

It localises to the nucleus. Its subcellular location is the nucleolus. It catalyses the reaction ATP + H2O = ADP + phosphate + H(+). ATP-binding RNA helicase involved in 40S ribosomal subunit biogenesis and is required for the normal formation of 18S rRNAs through pre-rRNA processing at A0, A1 and A2 sites. Required for vegetative growth. The chain is ATP-dependent RNA helicase dbp-8 (dbp-8) from Neurospora crassa (strain ATCC 24698 / 74-OR23-1A / CBS 708.71 / DSM 1257 / FGSC 987).